Here is a 413-residue protein sequence, read N- to C-terminus: Coiled-coil domain-containing protein 83 (413 aa).

The disordered stretch occupies residues 1-21 (MENSGKANKKDTHDGPPKEIK). Residues 8-21 (NKKDTHDGPPKEIK) are compositionally biased toward basic and acidic residues. Coiled-coil stretches lie at residues 37-184 (EDAV…RKKI) and 216-256 (WEND…LSNC).

In Homo sapiens (Human), this protein is Coiled-coil domain-containing protein 83 (CCDC83).